The chain runs to 711 residues: MKFFASCAKGLEYLLADELLALGASKATATISGVNVEGELRDAQRAVLWSRLASRVLWPLSEFDCPDEDALYAGVAELPWDAHLSVGHTLSVDAHVSGTAITHARYAAQRIKDAVVDTMRRQGLERPSVDVESPDLRLNLSLRKGRATISVDLGGGPLHRRGWRMAQNEAPLKENLAAAVLMRGGWPRAYADGGGLLDPMCGSGTLLIEGALMAADVAPGLQRYGSDLPSRWRGFDRNGWQQLVSEARERDSVGRAALKQVIHGSDMDPHAIRAAKENAQVAGVAEAIWFGVCEVGELQTPPQATGVVVCNPPYDERLAADAALYRRLGDTLQCAVPQWRASLLCGNAELAYATGLRAGKKYQLFNGAIECALIVCDPIAVPRRTPLAAPTALSEGAQMVANRLRKNLQKFKKWRAREGVECFRAYDADLPEYSAAIDVYQQADGDRRIFLHVQEYAAPATIPEADVRRRLNELLAAAREVFEVPAERVALKSRERGKGGSKYGRFEQRNEIVHVREHGALLRVNLFDYLDTGLFLDHRPLRGTMAQQSRGRRFLNLFCYTGVASVEAAVAGAASTTSVDLSGTYLQWCADNLALNGLAGSKHKLVQADALAWLEAERAHFDVIFCDPPTFSNSARAEDFDIQRAHVRLLRAAVARLAPGGVLYFSNNFRRFKLDEEGVAEFAQCEDISPRTIDPDFERHARIHRAWRLTA.

Residues 42 to 153 enclose the THUMP domain; it reads DAQRAVLWSR…KGRATISVDL (112 aa).

It belongs to the methyltransferase superfamily. RlmKL family.

Its subcellular location is the cytoplasm. The enzyme catalyses guanosine(2445) in 23S rRNA + S-adenosyl-L-methionine = N(2)-methylguanosine(2445) in 23S rRNA + S-adenosyl-L-homocysteine + H(+). The catalysed reaction is guanosine(2069) in 23S rRNA + S-adenosyl-L-methionine = N(2)-methylguanosine(2069) in 23S rRNA + S-adenosyl-L-homocysteine + H(+). Functionally, specifically methylates the guanine in position 2445 (m2G2445) and the guanine in position 2069 (m7G2069) of 23S rRNA. The polypeptide is Ribosomal RNA large subunit methyltransferase K/L (Xanthomonas oryzae pv. oryzae (strain MAFF 311018)).